The following is a 936-amino-acid chain: MSDYKNTLNLPETGFPMRGDLAKREPEMLSRWYKEGLYQAIRQAKSGKKTFILHDGPPYANGNIHIGHSVNKILKDIIIKSKGLSGFDSPYIPGWDCHGLPIELKVEQIVGKPGEKVSAAQFREECRKYAYEQIEAQKKDFIRLGVLGDWDKPYLTMDYKTEANTIRALARIIANGHLLKGAKPVHWCTACGSSLAEAEVEYYDKTSPSIDVRFRAVDSNAVAAKFGVVTDKPISLVIWTTTPWTLPANRAIALNGEFNYALVSFDDECVILAADLVEHVMKRIGVTDWAVLGECKGSDLELLRFNHPFMGFDVPAILGDHVTLDAGTGAVHTAPGHGPDDFVIGQKYGLEVANPVGPNGCYLPNTYPTLDGVFVFKANDVIVELLKEKGALLHHEAMQHSYPCCWRHKTPVIFRATPQWFIGMDKNGLRQQSLKEIKGVKWIPDWGQARIESMVENRPDWCISRQRTWGTPMSLFVHKETQEPHPRTLELMEEVAKRVEVSGIQAWWDLDIRELLGDEADDYMKTPDTLDVWFDSGSTHSTVVDARPEFHGNSADLYLEGSDQHRGWFMSSLMISTAIKGKAPYREVLTHGFTVDGQGRKMSKSIGNTVSPQDVMNKLGADILRLWVASTDYTGEIAVSDEILKRSADTYRRIRNTARFFLANLNGFDPAKHQVKPEEMVILDRWAVGRAKAAQEDILKHYENYDFHNVIQRLMQFCSVEMGSFYLDIIKDRQYTAKSDSVARRSCQTALYHIIEALVRWMAPIMSFTADEIWAQLPGERAKFVFTQEWYTDLFGLEASETLNDEYWAELLAVRSEVNKVLEQARTDKQLRGSLEAAVTLYADKALAEKLNALGNELRFVLLTSQATVADIHDAPENALASDMAGLKIVLSKAQGEKCPRCWHYATDIGQVAEHADLCGRCVTNVAGNGEERKFA.

A 'HIGH' region motif is present at residues 58–68; that stretch reads PYANGNIHIGH. Position 560 (Glu-560) interacts with L-isoleucyl-5'-AMP. The 'KMSKS' region signature appears at 601-605; the sequence is KMSKS. Lys-604 is an ATP binding site. Residues Cys-899, Cys-902, Cys-919, and Cys-922 each coordinate Zn(2+).

It belongs to the class-I aminoacyl-tRNA synthetase family. IleS type 1 subfamily. Monomer. Requires Zn(2+) as cofactor.

Its subcellular location is the cytoplasm. The catalysed reaction is tRNA(Ile) + L-isoleucine + ATP = L-isoleucyl-tRNA(Ile) + AMP + diphosphate. In terms of biological role, catalyzes the attachment of isoleucine to tRNA(Ile). As IleRS can inadvertently accommodate and process structurally similar amino acids such as valine, to avoid such errors it has two additional distinct tRNA(Ile)-dependent editing activities. One activity is designated as 'pretransfer' editing and involves the hydrolysis of activated Val-AMP. The other activity is designated 'posttransfer' editing and involves deacylation of mischarged Val-tRNA(Ile). The protein is Isoleucine--tRNA ligase of Proteus mirabilis (strain HI4320).